The chain runs to 174 residues: MRYSVSLENVAKLYAHNLPISTKHAVEIAKMIRYLPLQLAKEMLQKVLDKELAVPFFRYNRDIPHRKKGQIHPYFKIKHGRFPENATKWILKELNSVEKNAINLGMDPNKLFIVHIAAHKGVRGYTSVYGRRARRKATHLEIMVAENKDYDPSKKYPLKELKRMGHKLFLSLKK.

The protein belongs to the universal ribosomal protein uL22 family. In terms of assembly, part of the 50S ribosomal subunit.

In terms of biological role, this protein binds specifically to 23S rRNA. It makes multiple contacts with different domains of the 23S rRNA in the assembled 50S subunit and ribosome. Functionally, the globular domain of the protein is located near the polypeptide exit tunnel on the outside of the subunit, while an extended beta-hairpin is found that lines the wall of the exit tunnel in the center of the 70S ribosome. This Nanoarchaeum equitans (strain Kin4-M) protein is Large ribosomal subunit protein uL22.